Reading from the N-terminus, the 549-residue chain is CTP synthase (549 aa).

The amidoligase domain stretch occupies residues 1–267 (MAKFVFITGG…CREVLDVLNL (267 aa)). Residue serine 13 coordinates CTP. Serine 13 is a UTP binding site. Residues 14–19 (SIGKGI) and aspartate 71 each bind ATP. 2 residues coordinate Mg(2+): aspartate 71 and glutamate 141. CTP contacts are provided by residues 148 to 150 (DIE), 188 to 193 (KTKPTQ), and lysine 224. Residues 188 to 193 (KTKPTQ) and lysine 224 contribute to the UTP site. The region spanning 292 to 534 (KIALVGKYVQ…IEAAQQRLPD (243 aa)) is the Glutamine amidotransferase type-1 domain. Glycine 354 provides a ligand contact to L-glutamine. The active-site Nucleophile; for glutamine hydrolysis is cysteine 381. L-glutamine is bound by residues 382 to 385 (LGMQ), glutamate 405, and arginine 462. Catalysis depends on residues histidine 507 and glutamate 509.

It belongs to the CTP synthase family. Homotetramer.

It catalyses the reaction UTP + L-glutamine + ATP + H2O = CTP + L-glutamate + ADP + phosphate + 2 H(+). The catalysed reaction is L-glutamine + H2O = L-glutamate + NH4(+). It carries out the reaction UTP + NH4(+) + ATP = CTP + ADP + phosphate + 2 H(+). It functions in the pathway pyrimidine metabolism; CTP biosynthesis via de novo pathway; CTP from UDP: step 2/2. Its activity is regulated as follows. Allosterically activated by GTP, when glutamine is the substrate; GTP has no effect on the reaction when ammonia is the substrate. The allosteric effector GTP functions by stabilizing the protein conformation that binds the tetrahedral intermediate(s) formed during glutamine hydrolysis. Inhibited by the product CTP, via allosteric rather than competitive inhibition. In terms of biological role, catalyzes the ATP-dependent amination of UTP to CTP with either L-glutamine or ammonia as the source of nitrogen. Regulates intracellular CTP levels through interactions with the four ribonucleotide triphosphates. The protein is CTP synthase of Synechococcus sp. (strain CC9605).